The chain runs to 699 residues: Nucleolar and coiled-body phosphoprotein 1 (699 aa).

The LisH domain maps to 10-42; sequence VPSDLYPLVLGFLRDNQLSEVANKFAKATGATQ. Position 33 is an N6-acetyllysine (lysine 33). A disordered region spans residues 65–637; that stretch reads ERKLQANGPV…VREEEIEVDS (573 aa). Glycyl lysine isopeptide (Lys-Gly) (interchain with G-Cter in SUMO2) cross-links involve residues lysine 67 and lysine 76. One copy of the Acidic serine cluster 1 repeat lies at 84-95; the sequence is SSDSEDSSEEEE. The segment at 84–566 is 11 X 12 AA approximate repeats of an acidic serine cluster; the sequence is SSDSEDSSEE…GKAAKNSEEE (483 aa). A compositionally biased stretch (acidic residues) spans 86–97; that stretch reads DSEDSSEEEEEV. A phosphoserine mark is found at serine 87, serine 90, and serine 91. Serine 91 is subject to Diphosphoserine. Positions 100-110 are enriched in low complexity; the sequence is PPAKKAAVPAK. The Acidic serine cluster 2 repeat unit spans residues 125–136; it reads ESSSSEESSDDD. Positions 144–159 are enriched in low complexity; the sequence is QPVQKGVKPQAKAAKA. An Acidic serine cluster 3 repeat occupies 167 to 178; sequence SDSDSDSSSEDE. A Glycyl lysine isopeptide (Lys-Gly) (interchain with G-Cter in SUMO2) cross-link involves residue lysine 186. Threonine 188 carries the phosphothreonine modification. Lysine 193 participates in a covalent cross-link: Glycyl lysine isopeptide (Lys-Gly) (interchain with G-Cter in SUMO2). 2 stretches are compositionally biased toward low complexity: residues 193-227 and 236-261; these read KAQT…SSSS and AATP…TTPT. The interaction with RPA194 stretch occupies residues 204–382; the sequence is RAAPKIANGK…DDEAPSKPAG (179 aa). One copy of the Acidic serine cluster 4 repeat lies at 221–232; the sequence is SSSSSSSDDSEE. The Acidic serine cluster 5 repeat unit spans residues 264 to 275; the sequence is SSSSEDSSSDEE. The segment covering 291-301 has biased composition (pro residues); the sequence is SVPPPSAPPPK. Residues 321 to 333 are compositionally biased toward acidic residues; it reads SSEDSSDESDSSS. One copy of the Acidic serine cluster 6 repeat lies at 325 to 336; it reads SSDESDSSSEEE. Glycyl lysine isopeptide (Lys-Gly) (interchain with G-Cter in SUMO2) cross-links involve residues lysine 342 and lysine 347. A phosphoserine mark is found at serine 362, serine 363, and serine 366. The stretch at 363 to 375 is one Acidic serine cluster 7 repeat; it reads SDSSDSDSSEDDE. Positions 366 to 375 are enriched in acidic residues; sequence SDSDSSEDDE. Residues 381–397 show a composition bias toward polar residues; the sequence is AGTTKNSSNKPAVTTKS. Glycyl lysine isopeptide (Lys-Gly) (interchain with G-Cter in SUMO2) cross-links involve residues lysine 390 and lysine 396. The residue at position 397 (serine 397) is a Phosphoserine. The segment covering 398–409 has biased composition (low complexity); the sequence is PAVKPAAAPKQP. Residues lysine 401 and lysine 407 each participate in a glycyl lysine isopeptide (Lys-Gly) (interchain with G-Cter in SUMO2) cross-link. Lysine 415 is modified (N6-acetyllysine; alternate). Lysine 415 participates in a covalent cross-link: Glycyl lysine isopeptide (Lys-Gly) (interchain with G-Cter in SUMO1); alternate. Lysine 415 participates in a covalent cross-link: Glycyl lysine isopeptide (Lys-Gly) (interchain with G-Cter in SUMO2); alternate. One copy of the Acidic serine cluster 8 repeat lies at 425 to 436; that stretch reads SSEEESSSSEEE. Residues lysine 440 and lysine 452 each participate in a glycyl lysine isopeptide (Lys-Gly) (interchain with G-Cter in SUMO2) cross-link. Composition is skewed to low complexity over residues 441 to 476 and 498 to 523; these read MVAT…SDSS and AGGA…SSSD. Serine 456 carries the post-translational modification Phosphoserine. An Acidic serine cluster 9 repeat occupies 470 to 481; that stretch reads SSDSDSSSSEEE. Lysine 505 participates in a covalent cross-link: Glycyl lysine isopeptide (Lys-Gly) (interchain with G-Cter in SUMO2). Residue serine 508 is modified to Phosphoserine. An Acidic serine cluster 10 repeat occupies 519-529; sequence SSSSDDSSEEE. Serine 538 bears the Phosphoserine mark. The span at 547–556 shows a compositional bias: polar residues; it reads NGTSALTAQN. One copy of the Acidic serine cluster 11 repeat lies at 555 to 566; sequence QNGKAAKNSEEE. Serine 563 is subject to Phosphoserine. A Glycyl lysine isopeptide (Lys-Gly) (interchain with G-Cter in SUMO1) cross-link involves residue lysine 572. Lysine 579 is covalently cross-linked (Glycyl lysine isopeptide (Lys-Gly) (interchain with G-Cter in SUMO2)). 2 positions are modified to phosphoserine: serine 580 and serine 582. Lysine 604 participates in a covalent cross-link: Glycyl lysine isopeptide (Lys-Gly) (interchain with G-Cter in SUMO2). Phosphothreonine occurs at positions 607 and 610. Lysine 613 participates in a covalent cross-link: Glycyl lysine isopeptide (Lys-Gly) (interchain with G-Cter in SUMO2). Phosphoserine is present on serine 622. Residues 627–637 are compositionally biased toward basic and acidic residues; it reads RVREEEIEVDS. Serine 643 is subject to Phosphoserine. A Glycyl lysine isopeptide (Lys-Gly) (interchain with G-Cter in SUMO2) cross-link involves residue lysine 647. Residue lysine 663 is modified to N6-acetyllysine; alternate. Lysine 663 participates in a covalent cross-link: Glycyl lysine isopeptide (Lys-Gly) (interchain with G-Cter in SUMO2); alternate. Arginine 683 carries the post-translational modification Omega-N-methylarginine. The residue at position 686 (serine 686) is a Phosphoserine. Lysine 695 is covalently cross-linked (Glycyl lysine isopeptide (Lys-Gly) (interchain with G-Cter in SUMO2)). Serine 698 carries the phosphoserine modification.

This sequence belongs to the NOLC1 family. In terms of assembly, heterodimer; heterodimerizes with TCOF1 following monoubiquitination. Interacts with RNA polymerase I 194 kDa subunit (RPA194) and with casein kinase-II. Interacts with DKC1/NAP57, NOP58 and fibrillarin. In terms of processing, undergoes rapid and massive phosphorylation/dephosphorylation cycles on CK2 and PKC sites. NOLC1 is one of the mostly phosphorylated proteins in the cell. Post-translationally, ubiquitinated. Monoubiquitination by the BCR(KBTBD8) complex promotes the formation of a NOLC1-TCOF1 complex that acts as a platform to connect RNA polymerase I with enzymes responsible for ribosomal processing and modification, leading to remodel the translational program of differentiating cells in favor of neural crest specification. Pyrophosphorylated by 5-diphosphoinositol pentakisphosphate (5-IP7). Serine pyrophosphorylation is achieved by Mg(2+)-dependent, but enzyme independent transfer of a beta-phosphate from a inositol pyrophosphate to a pre-phosphorylated serine residue.

It localises to the nucleus. The protein resides in the nucleolus. It is found in the cytoplasm. Nucleolar protein that acts as a regulator of RNA polymerase I by connecting RNA polymerase I with enzymes responsible for ribosomal processing and modification. Required for neural crest specification: following monoubiquitination by the BCR(KBTBD8) complex, associates with TCOF1 and acts as a platform to connect RNA polymerase I with enzymes responsible for ribosomal processing and modification, leading to remodel the translational program of differentiating cells in favor of neural crest specification. Involved in nucleologenesis, possibly by playing a role in the maintenance of the fundamental structure of the fibrillar center and dense fibrillar component in the nucleolus. It has intrinsic GTPase and ATPase activities. This chain is Nucleolar and coiled-body phosphoprotein 1, found in Homo sapiens (Human).